A 167-amino-acid chain; its full sequence is Ribosome maturation factor RimM (167 aa).

The region spanning 94–165 (ENEYYYSDII…TIRITPMEGL (72 aa)) is the PRC barrel domain.

This sequence belongs to the RimM family. Binds ribosomal protein uS19.

It is found in the cytoplasm. Its function is as follows. An accessory protein needed during the final step in the assembly of 30S ribosomal subunit, possibly for assembly of the head region. Essential for efficient processing of 16S rRNA. May be needed both before and after RbfA during the maturation of 16S rRNA. It has affinity for free ribosomal 30S subunits but not for 70S ribosomes. This Staphylococcus haemolyticus (strain JCSC1435) protein is Ribosome maturation factor RimM.